The following is a 185-amino-acid chain: MNSLFMIFSLGIVGASLMVISTPNPVYSVFWLVIAFVNAAVMFISLGLDYIGLIFIIVYVGAIAILFLFVIMLIQQPNKIDSQDHSHFLPIGLSVIFLFYSLLTNSPKYISNPVIGSRTNIGAIGSHLYTTYYELVLIASLVLLVAMIGAILLAKQPNSPFLYNSHGESLRSRQDLFLQISREHL.

Transmembrane regions (helical) follow at residues 3-23 (SLFM…ISTP), 28-48 (SVFW…SLGL), 54-74 (IFII…IMLI), 87-107 (HFLP…TNSP), and 134-154 (ELVL…ILLA).

This sequence belongs to the complex I subunit 6 family.

Its subcellular location is the mitochondrion membrane. The catalysed reaction is a ubiquinone + NADH + 5 H(+)(in) = a ubiquinol + NAD(+) + 4 H(+)(out). Core subunit of the mitochondrial membrane respiratory chain NADH dehydrogenase (Complex I) that is believed to belong to the minimal assembly required for catalysis. Complex I functions in the transfer of electrons from NADH to the respiratory chain. The immediate electron acceptor for the enzyme is believed to be ubiquinone. The protein is NADH-ubiquinone oxidoreductase chain 6 (ND6) of Sarcophyton glaucum (Toadstool umbrella leather coral).